A 160-amino-acid polypeptide reads, in one-letter code: Large ribosomal subunit protein uL22c (160 aa).

Belongs to the universal ribosomal protein uL22 family. As to quaternary structure, part of the 50S ribosomal subunit.

Its subcellular location is the plastid. The protein localises to the chloroplast. This protein binds specifically to 23S rRNA. In terms of biological role, the globular domain of the protein is located near the polypeptide exit tunnel on the outside of the subunit, while an extended beta-hairpin is found that lines the wall of the exit tunnel in the center of the 70S ribosome. The chain is Large ribosomal subunit protein uL22c (rpl22) from Capsella bursa-pastoris (Shepherd's purse).